The primary structure comprises 165 residues: Large ribosomal subunit protein uL10 (165 aa).

This sequence belongs to the universal ribosomal protein uL10 family. In terms of assembly, part of the ribosomal stalk of the 50S ribosomal subunit. The N-terminus interacts with L11 and the large rRNA to form the base of the stalk. The C-terminus forms an elongated spine to which L12 dimers bind in a sequential fashion forming a multimeric L10(L12)X complex.

Its function is as follows. Forms part of the ribosomal stalk, playing a central role in the interaction of the ribosome with GTP-bound translation factors. This is Large ribosomal subunit protein uL10 from Pectobacterium carotovorum subsp. carotovorum (strain PC1).